The chain runs to 339 residues: UPF0450 protein C17orf58 (339 aa).

A signal peptide spans 1–17; sequence MTARAFWLLCLIVGSSP. A disordered region spans residues 17 to 191; it reads PEAPVAERKT…PQRDAEPGAE (175 aa). Residues 21 to 36 show a composition bias toward basic and acidic residues; it reads VAERKTSPPHSRKPDS. Low complexity predominate over residues 56–72; that stretch reads APQRPRAAEVAPAARAW. Over residues 112-125 the composition is skewed to basic and acidic residues; sequence ASPRREPASEDAPR. Low complexity predominate over residues 132–163; sequence LRFPAARPPALATEGSAGHAHPNRPRAAALAP. Disulfide bonds link C193-C267, C197-C271, and C208-C338. The region spanning 193 to 338 is the NTR domain; that stretch reads CARACRSDLD…QIQGAIHTQC (146 aa).

The protein belongs to the UPF0450 family.

This is UPF0450 protein C17orf58 (C17orf58) from Homo sapiens (Human).